The chain runs to 267 residues: Tryptophan synthase alpha chain (267 aa).

Active-site proton acceptor residues include Glu-47 and Asp-58.

It belongs to the TrpA family. Tetramer of two alpha and two beta chains.

It carries out the reaction (1S,2R)-1-C-(indol-3-yl)glycerol 3-phosphate + L-serine = D-glyceraldehyde 3-phosphate + L-tryptophan + H2O. It participates in amino-acid biosynthesis; L-tryptophan biosynthesis; L-tryptophan from chorismate: step 5/5. Its function is as follows. The alpha subunit is responsible for the aldol cleavage of indoleglycerol phosphate to indole and glyceraldehyde 3-phosphate. This chain is Tryptophan synthase alpha chain, found in Chlorobium chlorochromatii (strain CaD3).